The chain runs to 253 residues: Imidazole glycerol phosphate synthase subunit HisF (253 aa).

Active-site residues include Asp11 and Asp130.

The protein belongs to the HisA/HisF family. In terms of assembly, heterodimer of HisH and HisF.

Its subcellular location is the cytoplasm. The enzyme catalyses 5-[(5-phospho-1-deoxy-D-ribulos-1-ylimino)methylamino]-1-(5-phospho-beta-D-ribosyl)imidazole-4-carboxamide + L-glutamine = D-erythro-1-(imidazol-4-yl)glycerol 3-phosphate + 5-amino-1-(5-phospho-beta-D-ribosyl)imidazole-4-carboxamide + L-glutamate + H(+). It functions in the pathway amino-acid biosynthesis; L-histidine biosynthesis; L-histidine from 5-phospho-alpha-D-ribose 1-diphosphate: step 5/9. Functionally, IGPS catalyzes the conversion of PRFAR and glutamine to IGP, AICAR and glutamate. The HisF subunit catalyzes the cyclization activity that produces IGP and AICAR from PRFAR using the ammonia provided by the HisH subunit. The sequence is that of Imidazole glycerol phosphate synthase subunit HisF from Ruegeria sp. (strain TM1040) (Silicibacter sp.).